A 459-amino-acid polypeptide reads, in one-letter code: Palmitoyltransferase PFA4 (459 aa).

Topologically, residues 1 to 9 (MAARNWSRV) are cytoplasmic. The helical transmembrane segment at 10 to 30 (WVGGTVILISFIAFSSQIFVI) threads the bilayer. At 31–37 (WPWYGRE) the chain is on the lumenal side. A helical transmembrane segment spans residues 38–58 (ISLDLLKLLVPLNLAAFMIFW). Topologically, residues 59-138 (NYRLCVITSP…GNCVGFYNQG (80 aa)) are cytoplasmic. The DHHC domain maps to 95 to 145 (RYCKNCEHYKPPRAHHCRQCKTCWLKLDHHCPWIGNCVGFYNQGHFIRFLL). Residue cysteine 125 is the S-palmitoyl cysteine intermediate of the active site. A helical transmembrane segment spans residues 139-159 (HFIRFLLWVDIGTTFHLIIMV). The Lumenal portion of the chain corresponds to 160 to 177 (RRVLYIAEYYHQEPTLAD). A helical membrane pass occupies residues 178–198 (VLFLVFNFATCVPVWLCVGMF). The Cytoplasmic portion of the chain corresponds to 199–459 (SIYHVYLACG…DTEEESGYAH (261 aa)). The segment at 278–379 (HTTQYFWPPQ…DYDHYDEGPM (102 aa)) is disordered. A compositionally biased stretch (pro residues) spans 286–299 (PQDPSRLPNPPPIP). Over residues 310-322 (NGFNPNLQPTNSL) the composition is skewed to polar residues. The segment covering 331-356 (HIDEDEHSHERDQYRHYSSGEERDND) has biased composition (basic and acidic residues).

It belongs to the DHHC palmitoyltransferase family. PFA4 subfamily.

It is found in the endoplasmic reticulum membrane. The enzyme catalyses L-cysteinyl-[protein] + hexadecanoyl-CoA = S-hexadecanoyl-L-cysteinyl-[protein] + CoA. Mediates the reversible addition of palmitate to target proteins, thereby regulating their membrane association and biological function. The polypeptide is Palmitoyltransferase PFA4 (Cryptococcus neoformans var. neoformans serotype D (strain B-3501A) (Filobasidiella neoformans)).